The primary structure comprises 214 residues: Cytochrome b (214 aa).

4 consecutive transmembrane segments (helical) span residues phenylalanine 31–isoleucine 51, tryptophan 75–isoleucine 96, tryptophan 111–leucine 131, and phenylalanine 176–leucine 196. Heme b-binding residues include histidine 81 and histidine 95. Residues histidine 180 and histidine 194 each contribute to the heme b site. Histidine 199 lines the a ubiquinone pocket.

This sequence belongs to the cytochrome b family. The cytochrome bc1 complex contains 3 respiratory subunits (MT-CYB, CYC1 and UQCRFS1), 2 core proteins (UQCRC1 and UQCRC2) and probably 6 low-molecular weight proteins. The cofactor is heme b.

It is found in the mitochondrion inner membrane. In terms of biological role, component of the ubiquinol-cytochrome c reductase complex (complex III or cytochrome b-c1 complex) that is part of the mitochondrial respiratory chain. The b-c1 complex mediates electron transfer from ubiquinol to cytochrome c. Contributes to the generation of a proton gradient across the mitochondrial membrane that is then used for ATP synthesis. The chain is Cytochrome b (MT-CYB) from Bothrops bilineatus (Green jararaca).